The following is a 798-amino-acid chain: Type 2 DNA topoisomerase 6 subunit B (798 aa).

Residues N60, D91, 112–113 (SR), and 122–129 (GQQGIGIS) contribute to the ATP site. Over residues 221 to 233 (EPEDSFKSERATE) the composition is skewed to basic and acidic residues. The tract at residues 221–245 (EPEDSFKSERATEELPPETEEIRPH) is disordered. K629 provides a ligand contact to ATP.

The protein belongs to the TOP6B family. In terms of assembly, homodimer. Heterotetramer of two Top6A and two Top6B chains.

The catalysed reaction is ATP-dependent breakage, passage and rejoining of double-stranded DNA.. In terms of biological role, relaxes both positive and negative superturns and exhibits a strong decatenase activity. This chain is Type 2 DNA topoisomerase 6 subunit B, found in Natronomonas pharaonis (strain ATCC 35678 / DSM 2160 / CIP 103997 / JCM 8858 / NBRC 14720 / NCIMB 2260 / Gabara) (Halobacterium pharaonis).